Reading from the N-terminus, the 352-residue chain is tRNA uridine(34) hydroxylase (352 aa).

The region spanning 144-238 (SDPDVILIDT…YLEEVPASDS (95 aa)) is the Rhodanese domain. Residue cysteine 198 is the Cysteine persulfide intermediate of the active site.

It belongs to the TrhO family.

It catalyses the reaction uridine(34) in tRNA + AH2 + O2 = 5-hydroxyuridine(34) in tRNA + A + H2O. Catalyzes oxygen-dependent 5-hydroxyuridine (ho5U) modification at position 34 in tRNAs. In Psychrobacter cryohalolentis (strain ATCC BAA-1226 / DSM 17306 / VKM B-2378 / K5), this protein is tRNA uridine(34) hydroxylase.